We begin with the raw amino-acid sequence, 116 residues long: Large ribosomal subunit protein bL17 (116 aa).

It belongs to the bacterial ribosomal protein bL17 family. Part of the 50S ribosomal subunit. Contacts protein L32.

The protein is Large ribosomal subunit protein bL17 of Prochlorococcus marinus subsp. pastoris (strain CCMP1986 / NIES-2087 / MED4).